The following is a 429-amino-acid chain: Serine hydroxymethyltransferase (429 aa).

Residues Leu-126 and 130-132 (GHL) each bind (6S)-5,6,7,8-tetrahydrofolate. Lys-235 carries the N6-(pyridoxal phosphate)lysine modification. 359–361 (SPF) contributes to the (6S)-5,6,7,8-tetrahydrofolate binding site.

This sequence belongs to the SHMT family. Homodimer. Pyridoxal 5'-phosphate serves as cofactor.

It is found in the cytoplasm. It carries out the reaction (6R)-5,10-methylene-5,6,7,8-tetrahydrofolate + glycine + H2O = (6S)-5,6,7,8-tetrahydrofolate + L-serine. Its pathway is one-carbon metabolism; tetrahydrofolate interconversion. It functions in the pathway amino-acid biosynthesis; glycine biosynthesis; glycine from L-serine: step 1/1. Functionally, catalyzes the reversible interconversion of serine and glycine with tetrahydrofolate (THF) serving as the one-carbon carrier. This reaction serves as the major source of one-carbon groups required for the biosynthesis of purines, thymidylate, methionine, and other important biomolecules. Also exhibits THF-independent aldolase activity toward beta-hydroxyamino acids, producing glycine and aldehydes, via a retro-aldol mechanism. The polypeptide is Serine hydroxymethyltransferase (Synechococcus sp. (strain WH7803)).